The following is a 241-amino-acid chain: 2-C-methyl-D-erythritol 4-phosphate cytidylyltransferase (241 aa).

It belongs to the IspD/TarI cytidylyltransferase family. IspD subfamily.

The enzyme catalyses 2-C-methyl-D-erythritol 4-phosphate + CTP + H(+) = 4-CDP-2-C-methyl-D-erythritol + diphosphate. Its pathway is isoprenoid biosynthesis; isopentenyl diphosphate biosynthesis via DXP pathway; isopentenyl diphosphate from 1-deoxy-D-xylulose 5-phosphate: step 2/6. Its function is as follows. Catalyzes the formation of 4-diphosphocytidyl-2-C-methyl-D-erythritol from CTP and 2-C-methyl-D-erythritol 4-phosphate (MEP). In Mycobacterium leprae (strain Br4923), this protein is 2-C-methyl-D-erythritol 4-phosphate cytidylyltransferase.